We begin with the raw amino-acid sequence, 253 residues long: 5'-nucleotidase SurE (253 aa).

A divalent metal cation contacts are provided by Asp8, Asp9, Ser39, and Asn91.

The protein belongs to the SurE nucleotidase family. A divalent metal cation is required as a cofactor.

It localises to the cytoplasm. The catalysed reaction is a ribonucleoside 5'-phosphate + H2O = a ribonucleoside + phosphate. In terms of biological role, nucleotidase that shows phosphatase activity on nucleoside 5'-monophosphates. The protein is 5'-nucleotidase SurE of Albidiferax ferrireducens (strain ATCC BAA-621 / DSM 15236 / T118) (Rhodoferax ferrireducens).